The primary structure comprises 356 residues: Tyrosine recombinase XerS (356 aa).

Residues 16–121 (IMPWYVLDYY…ALSSLYKYLT (106 aa)) enclose the Core-binding (CB) domain. A Tyr recombinase domain is found at 169–354 (AFLDYVDKEY…VNDEQKNALD (186 aa)). Catalysis depends on residues Arg210, Lys234, His306, Arg309, and His332. Tyr341 functions as the O-(3'-phospho-DNA)-tyrosine intermediate in the catalytic mechanism.

This sequence belongs to the 'phage' integrase family. XerS subfamily.

The protein localises to the cytoplasm. FtsK is required for recombination. Site-specific tyrosine recombinase, which acts by catalyzing the cutting and rejoining of the recombining DNA molecules. Essential to convert dimers of the bacterial chromosome into monomers to permit their segregation at cell division. In Streptococcus equi subsp. equi (strain 4047), this protein is Tyrosine recombinase XerS.